The primary structure comprises 160 residues: Transcription elongation factor GreA (160 aa).

The stretch at 14–76 forms a coiled coil; it reads VKKLEEELEY…QLENMLKNAS (63 aa).

This sequence belongs to the GreA/GreB family.

In terms of biological role, necessary for efficient RNA polymerase transcription elongation past template-encoded arresting sites. The arresting sites in DNA have the property of trapping a certain fraction of elongating RNA polymerases that pass through, resulting in locked ternary complexes. Cleavage of the nascent transcript by cleavage factors such as GreA or GreB allows the resumption of elongation from the new 3'terminus. GreA releases sequences of 2 to 3 nucleotides. This Clostridium botulinum (strain Okra / Type B1) protein is Transcription elongation factor GreA.